Reading from the N-terminus, the 307-residue chain is High-affinity branched-chain amino acid transport system permease protein BraD (307 aa).

10 helical membrane-spanning segments follow: residues 21–41 (YALI…INFA), 45–65 (VYMI…MMGL), 70–90 (LMML…GYSI), 104–124 (LIPL…VMLS), 132–152 (IPTL…GVVI), 154–174 (YMQI…TLFI), 203–223 (IIAL…VLLG), 224–244 (MQYG…AFTA), 245–265 (AVLG…LLGV), and 280–300 (DVVA…GILG).

This sequence belongs to the binding-protein-dependent transport system permease family. LivHM subfamily.

Its subcellular location is the cell inner membrane. In terms of biological role, component of the high affinity leucine, isoleucine, valine, transport system (LIV-I), which is operative without Na(+) and is specific for alanine and threonine, in addition to branched-chain amino acids. The polypeptide is High-affinity branched-chain amino acid transport system permease protein BraD (braD) (Pseudomonas aeruginosa (strain ATCC 15692 / DSM 22644 / CIP 104116 / JCM 14847 / LMG 12228 / 1C / PRS 101 / PAO1)).